Reading from the N-terminus, the 1082-residue chain is SURP and G-patch domain-containing protein 2 (1082 aa).

At threonine 7 the chain carries Phosphothreonine. Residues 65 to 97 form a disordered region; sequence LSGSVAHSRDAGREGLRSDVFPGPSFRSSNPSI. Residues 71–81 show a composition bias toward basic and acidic residues; sequence HSRDAGREGLR. Residues serine 96 and serine 224 each carry the phosphoserine modification. A Glycyl lysine isopeptide (Lys-Gly) (interchain with G-Cter in SUMO2) cross-link involves residue lysine 228. At threonine 275 the chain carries Phosphothreonine. Position 277 is a phosphoserine (serine 277). Lysine 305 participates in a covalent cross-link: Glycyl lysine isopeptide (Lys-Gly) (interchain with G-Cter in SUMO2). Phosphoserine occurs at positions 315, 573, and 603. The SURP motif 1 repeat unit spans residues 590-633; the sequence is IDQLVKRVIEGSLSPKERTLLKEDPAYWFLSDENSLEYKYYKLK. Residue lysine 650 forms a Glycyl lysine isopeptide (Lys-Gly) (interchain with G-Cter in SUMO2) linkage. Positions 694–779 are disordered; it reads RRATTGTQTL…QTSSPCPSAD (86 aa). Over residues 697-708 the composition is skewed to low complexity; sequence TTGTQTLLSSGT. Over residues 727 to 738 the composition is skewed to basic and acidic residues; sequence LPDRNDAAKDCP. Phosphoserine is present on residues serine 754 and serine 757. The stretch at 787–830 is one SURP motif 2 repeat; that stretch reads TAEKLARFVAQVGPEIEQFSIENSTDNPDLWFLHDQNSSAFKFY. 3 disordered regions span residues 849-930, 982-1002, and 1030-1061; these read NLHT…EAAE, RIAYDRPRGRPMSKKKKPKDL, and LGSLGKGIREPVSVGTPSEGEGLGADGQEHKE. Serine 863 carries the post-translational modification Phosphoserine. Composition is skewed to acidic residues over residues 868 to 877 and 885 to 904; these read MEGEAEFEDE and LESPEVMPEEEDEDDEDGGE. A compositionally biased stretch (basic residues) spans 990-999; that stretch reads GRPMSKKKKP. A Nuclear localization signal motif is present at residues 995–1000; the sequence is KKKKPK. One can recognise a G-patch domain in the interval 1011-1057; that stretch reads DKNLGFQMLQKMGWKEGHGLGSLGKGIREPVSVGTPSEGEGLGADGQ.

Detected in adult testis, and in fetal brain and kidney.

Its subcellular location is the nucleus. May play a role in mRNA splicing. The sequence is that of SURP and G-patch domain-containing protein 2 (SUGP2) from Homo sapiens (Human).